A 241-amino-acid polypeptide reads, in one-letter code: Small ribosomal subunit protein uS2 (241 aa).

This sequence belongs to the universal ribosomal protein uS2 family.

The sequence is that of Small ribosomal subunit protein uS2 from Glaesserella parasuis serovar 5 (strain SH0165) (Haemophilus parasuis).